An 832-amino-acid polypeptide reads, in one-letter code: MADPAAESIDASSSRFGRVVCYNQTAMHGSNTISAAAPFFMTQLSVANLTYRILYYFLKPLCLPPFVAQILCGLLFSPTVLGNNEVVLKLIFPYKYTMLLETFANLALVYNVFLLGLGLDLRMIKIKDIKPVIIAIVGLLAALLAGAGLYYLPSNGEADKILAGCMYWSIAFGCTNFPDLARILADLKLLRTDMGHTAMCAAVVTDLCTWILFIFGMAIFSKSGVRNEMLPYSLASTIAFVLLCYFVIQPGVAWIFNNTVEGGQVGDTHVWYTLAGVIICSLITEVCGVHSITGAFLFGLSIPHDHIIRKMIEEKLHDFLSGMLMPLFYIICGLRADIGYMNRTVSVGMMAVVTSASVMVKILSTMFCSIFLRIPLRDGLAIGALMNTKGTMALVILNAGRDTKALDVIMYTHLTLAFLVMSMVVQPLLAIAYKPKKKLIFYKNRTIQKHKGESELCVLTCVHVLPNVSGITNLLQLSNPTKKSPLNVFAIHLVELTGRTTASLLIMNDEAKPKANFADRVRAESDQIAEMFTALEVNNDGVMVQTITAVSPYATMDEDICLLAEDKQACFILLPYHKNMTSDGRLNEGNAVHAEINQNVMSHAPCSVGILVDRGMTTVRFESFMFQGETTKKEIAMLFLGGRDDREALAYAWRMVGQEMVQLTVVRFVPSQEALVSAGEAADEYEKDKHVDEESIYEFNFKTMNDPSVTYVEKVVKNGQETITAILELEDNNSYDLYIVGRGYQVETPVTSGLTDWNSTPDLGIIGDTLISSNFTMQASVLVVQQYSSANRQTAENNNQEPVQGKAKTDHEATPFMEDEDDEVEHQYSMRR.

Transmembrane regions (helical) follow at residues 33 to 55, 61 to 81, 99 to 119, 132 to 152, 161 to 181, 200 to 220, 236 to 256, 278 to 298, 319 to 339, 352 to 372, 379 to 399, and 413 to 433; these read ISAA…RILY, LCLP…PTVL, LLET…GLGL, VIIA…LYYL, ILAG…PDLA, CAAV…MAIF, STIA…AWIF, IICS…AFLF, FLSG…ADIG, VVTS…SIFL, GLAI…ILNA, and HLTL…AIAY. The span at 792–802 shows a compositional bias: polar residues; it reads RQTAENNNQEP. The disordered stretch occupies residues 792–832; that stretch reads RQTAENNNQEPVQGKAKTDHEATPFMEDEDDEVEHQYSMRR.

This sequence belongs to the monovalent cation:proton antiporter 2 (CPA2) transporter (TC 2.A.37) family. CHX (TC 2.A.37.4) subfamily. Specifically expressed in root endodermal cells. Expressed in seedlings, roots, leaves, flowers, flower buds and pollen.

The protein resides in the cell membrane. Its function is as follows. Operates as a Na(+)/H(+) antiporter that plays a role in regulation of xylem Na(+) concentration and, consequently, Na(+) accumulation in the leaf. Required for pollen tube guidance, but not for normal pollen development. May also be involved in the development or function of the female gametophyte. This Arabidopsis thaliana (Mouse-ear cress) protein is Cation/H(+) antiporter 21 (CHX21).